The sequence spans 105 residues: DNA-directed RNA polymerase subunit omega (105 aa).

The protein belongs to the RNA polymerase subunit omega family. In terms of assembly, the RNAP catalytic core consists of 2 alpha, 1 beta, 1 beta' and 1 omega subunit. When a sigma factor is associated with the core the holoenzyme is formed, which can initiate transcription.

It carries out the reaction RNA(n) + a ribonucleoside 5'-triphosphate = RNA(n+1) + diphosphate. Its function is as follows. Promotes RNA polymerase assembly. Latches the N- and C-terminal regions of the beta' subunit thereby facilitating its interaction with the beta and alpha subunits. The sequence is that of DNA-directed RNA polymerase subunit omega from Streptococcus mutans serotype c (strain ATCC 700610 / UA159).